The sequence spans 553 residues: Putative transport protein YidE (553 aa).

5 helical membrane-spanning segments follow: residues 4–24, 28–48, 65–85, 95–115, and 158–178; these read IALT…IGNV, GIGL…HFVS, FGLI…FFAS, LFAV…HKLF, and MSYA…MWML. RCK C-terminal domains follow at residues 191–276 and 279–361; these read QQHE…VIGQ and DTSL…VLGN. A run of 6 helical transmembrane segments spans residues 371-391, 393-413, 439-459, 464-484, 493-513, and 533-553; these read MLPV…PVFV, GFPA…ALIL, IVLF…NTLV, LSWI…VGIL, YLTM…LAFA, and LVMF…WSIG.

It belongs to the AAE transporter (TC 2.A.81) family. YidE subfamily.

The protein localises to the cell membrane. The protein is Putative transport protein YidE of Shigella flexneri serotype 5b (strain 8401).